The following is a 411-amino-acid chain: Lissencephaly-1 homolog (411 aa).

Residues 9 to 41 (QREELNQAIADYLGSNGYADSLETFRKEADLST) enclose the LisH domain. Residues 56-83 (TSVIRLQKKVMELEAKLTEAEKEVIEGA) adopt a coiled-coil conformation. WD repeat units lie at residues 106 to 147 (GHRA…RSLK), 148 to 187 (GHTD…ECIK), 191 to 230 (GHDH…CVKT), 233 to 272 (GHRE…CKVE), 275 to 334 (DHEH…CLLT), 337 to 376 (GHDN…CMKT), and 379 to 411 (AHQH…WECR).

It belongs to the WD repeat LIS1/nudF family.

The protein localises to the cytoplasm. It localises to the cytoskeleton. The protein resides in the microtubule organizing center. It is found in the centrosome. Positively regulates the activity of the minus-end directed microtubule motor protein dynein. May enhance dynein-mediated microtubule sliding by targeting dynein to the microtubule plus end. Required for several dynein- and microtubule-dependent processes. In Drosophila yakuba (Fruit fly), this protein is Lissencephaly-1 homolog.